Here is a 378-residue protein sequence, read N- to C-terminus: Probable 3-hydroxyisobutyryl-CoA hydrolase 3 (378 aa).

Residues Glu138 and Asp146 each coordinate substrate.

This sequence belongs to the enoyl-CoA hydratase/isomerase family.

It is found in the peroxisome. The catalysed reaction is 3-hydroxy-2-methylpropanoyl-CoA + H2O = 3-hydroxy-2-methylpropanoate + CoA + H(+). The protein operates within amino-acid degradation; L-valine degradation. Functionally, involved in valine catabolism. This is Probable 3-hydroxyisobutyryl-CoA hydrolase 3 from Arabidopsis thaliana (Mouse-ear cress).